We begin with the raw amino-acid sequence, 570 residues long: Proline--tRNA ligase (570 aa).

Belongs to the class-II aminoacyl-tRNA synthetase family. ProS type 1 subfamily. Homodimer.

It is found in the cytoplasm. It catalyses the reaction tRNA(Pro) + L-proline + ATP = L-prolyl-tRNA(Pro) + AMP + diphosphate. Its function is as follows. Catalyzes the attachment of proline to tRNA(Pro) in a two-step reaction: proline is first activated by ATP to form Pro-AMP and then transferred to the acceptor end of tRNA(Pro). As ProRS can inadvertently accommodate and process non-cognate amino acids such as alanine and cysteine, to avoid such errors it has two additional distinct editing activities against alanine. One activity is designated as 'pretransfer' editing and involves the tRNA(Pro)-independent hydrolysis of activated Ala-AMP. The other activity is designated 'posttransfer' editing and involves deacylation of mischarged Ala-tRNA(Pro). The misacylated Cys-tRNA(Pro) is not edited by ProRS. The protein is Proline--tRNA ligase (proS) of Aquifex aeolicus (strain VF5).